Reading from the N-terminus, the 221-residue chain is Histone H1C (221 aa).

2 stretches are compositionally biased toward low complexity: residues 1 to 11 and 27 to 44; these read MTETAATETTP and KKAAGGAKAKKPSGPSAS. Disordered stretches follow at residues 1–44 and 123–221; these read MTET…PSAS and AKKK…AAKK. The region spanning 39–112 is the H15 domain; the sequence is SGPSASELIV…GASGSFKLNK (74 aa). Composition is skewed to basic residues over residues 123 to 150 and 158 to 221; these read AKKKLVAPKAKKPVAAKKKPKSPKKPKK and SPKK…AAKK.

Belongs to the histone H1/H5 family.

It is found in the nucleus. The protein localises to the chromosome. In terms of biological role, histones H1 are necessary for the condensation of nucleosome chains into higher-order structures. The protein is Histone H1C of Xenopus laevis (African clawed frog).